The following is a 141-amino-acid chain: uncharacterized protein (141 aa).

The HIT domain maps to Ile10–Phe117. A Histidine triad motif motif is present at residues His102–His106.

This is an uncharacterized protein from Mycoplasma genitalium (strain ATCC 33530 / DSM 19775 / NCTC 10195 / G37) (Mycoplasmoides genitalium).